The primary structure comprises 385 residues: MMLRSQAKNVDLTSQADSRHQQKRKQAEQLDALKNPSEPAAKKQHSKGLTELRAHISGFKIDSAKRDPLGKSRTSRRDVENLPPQKSRYVDPCPHYDYDLEEAGNPDSISDYAQGIFDYYRHREVHFRVRKYLHKHPEVDVKTRAILIDWMVEIQETFELNHETLYNAVKLTDMYLCKTKNVDKNTIQKLACVAIFIAAKYDERSPPLVDDLIYLSGDRFSRDELLAMERELFATVGYDLGSPLSYRYLRRFGRVCRVDMKTLTMGRFILETSLMVYEYAMVSQSRLAAAAFVLAMRMLDKNNEYEWNPVLEKYSGFTGEEVMPLVEHMNHILHFSKDKWAQLTSVRQKYSHEVFFHVASIPMLPDTLKVVDSHTYAPVPMLSYP.

Residues 1–16 (MMLRSQAKNVDLTSQA) are compositionally biased toward polar residues. 2 disordered regions span residues 1–48 (MMLR…HSKG) and 63–88 (SAKRDPLGKSRTSRRDVENLPPQKSR). Basic and acidic residues-rich tracts occupy residues 17–28 (DSRHQQKRKQAE) and 63–80 (SAKRDPLGKSRTSRRDVE).

It belongs to the cyclin family. Cyclin AB subfamily.

It localises to the nucleus. Functionally, could be involved at the G2/M (mitosis) transition. Interacts with the CDK1 and CDK2 protein kinases. G2/M cyclins accumulate steadily during G2 and are abruptly destroyed at mitosis. Plays a role during oocyte meiosis II. In Caenorhabditis elegans, this protein is G2/mitotic-specific cyclin-B3 (cyb-3).